The sequence spans 379 residues: Na(+)/H(+) antiporter NhaA (379 aa).

Transmembrane regions (helical) follow at residues 14-34 (AGGI…NTPL), 59-79 (LLMW…GMEV), 95-115 (VFPA…FLVF), 125-145 (GWAI…ALLG), 154-174 (IFLL…IALF), 175-195 (FSHD…AILI), 200-220 (LKIT…ASVL), 221-241 (KSGV…PLNG), 261-281 (FAIL…GMGM), 292-312 (IALG…FVAV), 328-348 (IFAV…LAGL), and 359-379 (VTAL…VLGY).

This sequence belongs to the NhaA Na(+)/H(+) (TC 2.A.33) antiporter family.

It localises to the cell inner membrane. It catalyses the reaction Na(+)(in) + 2 H(+)(out) = Na(+)(out) + 2 H(+)(in). Na(+)/H(+) antiporter that extrudes sodium in exchange for external protons. The polypeptide is Na(+)/H(+) antiporter NhaA (Pasteurella multocida (strain Pm70)).